Consider the following 656-residue polypeptide: Choline transporter-like protein 3 (656 aa).

The chain crosses the membrane as a helical span at residues W37–V57. Residues N141 and N154 are each glycosylated (N-linked (GlcNAc...) asparagine). The next 5 helical transmembrane spans lie at D216 to F236, L242 to L262, L288 to L308, L337 to L357, and Y381 to Q401. N-linked (GlcNAc...) asparagine glycans are attached at residues N506 and N524. Residues F537–A557 traverse the membrane as a helical segment. Residue N559 is glycosylated (N-linked (GlcNAc...) asparagine). The helical transmembrane segment at V566–L586 threads the bilayer. The tract at residues A634 to R656 is disordered.

The protein belongs to the CTL (choline transporter-like) family.

The protein localises to the membrane. This chain is Choline transporter-like protein 3 (Slc44a3), found in Mus musculus (Mouse).